The chain runs to 189 residues: Large ribosomal subunit protein bL25 (189 aa).

It belongs to the bacterial ribosomal protein bL25 family. CTC subfamily. Part of the 50S ribosomal subunit; part of the 5S rRNA/L5/L18/L25 subcomplex. Contacts the 5S rRNA. Binds to the 5S rRNA independently of L5 and L18.

Its function is as follows. This is one of the proteins that binds to the 5S RNA in the ribosome where it forms part of the central protuberance. The sequence is that of Large ribosomal subunit protein bL25 from Azobacteroides pseudotrichonymphae genomovar. CFP2.